The sequence spans 283 residues: Pantothenate synthetase (283 aa).

Position 30–37 (30–37 (MGNLHNGH)) interacts with ATP. Catalysis depends on His-37, which acts as the Proton donor. Gln-61 is a binding site for (R)-pantoate. Gln-61 is a beta-alanine binding site. ATP is bound at residue 149–152 (GEKD). Gln-155 serves as a coordination point for (R)-pantoate. 186–189 (LSSR) provides a ligand contact to ATP.

The protein belongs to the pantothenate synthetase family. In terms of assembly, homodimer.

It localises to the cytoplasm. It catalyses the reaction (R)-pantoate + beta-alanine + ATP = (R)-pantothenate + AMP + diphosphate + H(+). It functions in the pathway cofactor biosynthesis; (R)-pantothenate biosynthesis; (R)-pantothenate from (R)-pantoate and beta-alanine: step 1/1. Catalyzes the condensation of pantoate with beta-alanine in an ATP-dependent reaction via a pantoyl-adenylate intermediate. The chain is Pantothenate synthetase from Shigella flexneri serotype 5b (strain 8401).